Reading from the N-terminus, the 297-residue chain is Acetaldehyde dehydrogenase (297 aa).

An NAD(+)-binding site is contributed by 18–21 (TGNI). Cys-133 acts as the Acyl-thioester intermediate in catalysis. Residues 165–173 (SAGPATRLN) and Asn-275 contribute to the NAD(+) site.

The protein belongs to the acetaldehyde dehydrogenase family.

The catalysed reaction is acetaldehyde + NAD(+) + CoA = acetyl-CoA + NADH + H(+). The protein is Acetaldehyde dehydrogenase of Spirochaeta aurantia.